The following is a 930-amino-acid chain: MAAKLQIHAPYVLHALPRPLDRSDGLGRYFSGEVFGQKQGGKRKKRTELAVAIDGVAVYLYDILSSQVVTSYLVSPQSCFTCPPSSLRWRPASSKTVTRYTYVSVATGDSVLAKREIRLFREETLSTGNTVVACISRTICSDSPIVHIFTSSPRNFLTNVPGKDIPNHDLIIITANGSIFALNGETLEEKWQVSPSVLSREILSDSKLALQVDFVQQTSAADVADGLFGGKNDLFGVFQERIHRDGFNPDFFVVITSQSGADSANARHLHVLALPSEREARQTGKENVISVFVAPLAVEETCRSFQLDVRSGTLQAISNKALVTYQFANGIAKLENRLQVPGLSSYLRLSKTSVLTSATDSLSVYNPIYRSLQAAARLEPTDDTNGHACEFVSYLASRELAVAIRGGSLVVIQIEAPKNRTAKRRAEGLLTDAIRRGISRKIAFEKRTKPEHVSDSTILADAVPGSLSDPSWSEWQNKAMQADELLQNNDIQSWEELMAEVFKVPIKPDETADAEKQTAPNPVVKLPEWEWPSSRSDYARVDRRWVVYAINKVFGWEGQLESNTGRLTCRLPESSVLIYLVDAGHLSTSNVKSAFKDDVREVDKVEELIGEQLPIILAEVDPTMELLVGYLSGTQLGSSELVSSIKLLLCSLGLFEDGSRLPAVGDNTHIEQVTGQENEVVNMELDRAEEELQITEHYLDEHRTRGLGIAFSKLAACPAAETVKSLRRLFKPDEVLVLLNVLRAELIKDGWTTRYLDKINADQEDDAPPDASIQLIADLMSRCIDAVGLSGWMAADVMLSSSRTHQDSANFFSQFQAEISVALEGVMEAVRLKGVIAEAANYAKRARRALADSAKGKAMTVHMSAELPLGLKTDNKISTERVRSGGEIVARSSRQIGHFISKRRGIYSIHRISEEMLLGAAGPTVVQEAR.

A Nuclear localization signal motif is present at residues 434–441 (IRRGISRK).

Its subcellular location is the nucleus. This is an uncharacterized protein from Chaetomium thermophilum (strain DSM 1495 / CBS 144.50 / IMI 039719) (Thermochaetoides thermophila).